A 173-amino-acid chain; its full sequence is Ribosome maturation factor RimM (173 aa).

The PRC barrel domain occupies 94–168 (SNESYLCDLL…LIRINPPKGL (75 aa)).

Belongs to the RimM family. Binds ribosomal protein uS19.

The protein resides in the cytoplasm. In terms of biological role, an accessory protein needed during the final step in the assembly of 30S ribosomal subunit, possibly for assembly of the head region. Essential for efficient processing of 16S rRNA. May be needed both before and after RbfA during the maturation of 16S rRNA. It has affinity for free ribosomal 30S subunits but not for 70S ribosomes. The sequence is that of Ribosome maturation factor RimM from Lawsonia intracellularis (strain PHE/MN1-00).